Reading from the N-terminus, the 372-residue chain is N-methyl-L-tryptophan oxidase (372 aa).

Position 4 to 34 (4 to 34 (DLIIIGSGSVGAAAGYYATRAGLKVLMTDAH)) interacts with FAD. Residue Cys-307 is modified to S-8alpha-FAD cysteine.

It belongs to the MSOX/MTOX family. MTOX subfamily. As to quaternary structure, monomer. FAD is required as a cofactor.

It carries out the reaction N(alpha)-methyl-L-tryptophan + O2 + H2O = L-tryptophan + formaldehyde + H2O2. Catalyzes the oxidative demethylation of N-methyl-L-tryptophan. The polypeptide is N-methyl-L-tryptophan oxidase (Salmonella dublin (strain CT_02021853)).